The chain runs to 688 residues: UvrABC system protein C (688 aa).

Residues 1–14 (MSPLDQKNKPRGGA) are compositionally biased toward basic and acidic residues. A disordered region spans residues 1-20 (MSPLDQKNKPRGGADDLPPE). A GIY-YIG domain is found at 71–149 (NAPGVYRMMN…IKRLRPRFNV (79 aa)). The region spanning 259 to 294 (QKVKTEISAAMQQASEDLDFERAAIYRDRLAALSHV) is the UVR domain.

This sequence belongs to the UvrC family. In terms of assembly, interacts with UvrB in an incision complex.

It is found in the cytoplasm. In terms of biological role, the UvrABC repair system catalyzes the recognition and processing of DNA lesions. UvrC both incises the 5' and 3' sides of the lesion. The N-terminal half is responsible for the 3' incision and the C-terminal half is responsible for the 5' incision. The polypeptide is UvrABC system protein C (Mesorhizobium japonicum (strain LMG 29417 / CECT 9101 / MAFF 303099) (Mesorhizobium loti (strain MAFF 303099))).